Reading from the N-terminus, the 494-residue chain is Probable cytosol aminopeptidase (494 aa).

K260 and D265 together coordinate Mn(2+). K272 is a catalytic residue. The Mn(2+) site is built by D283, D342, and E344. R346 is a catalytic residue.

The protein belongs to the peptidase M17 family. Mn(2+) serves as cofactor.

Its subcellular location is the cytoplasm. The catalysed reaction is Release of an N-terminal amino acid, Xaa-|-Yaa-, in which Xaa is preferably Leu, but may be other amino acids including Pro although not Arg or Lys, and Yaa may be Pro. Amino acid amides and methyl esters are also readily hydrolyzed, but rates on arylamides are exceedingly low.. The enzyme catalyses Release of an N-terminal amino acid, preferentially leucine, but not glutamic or aspartic acids.. Its function is as follows. Presumably involved in the processing and regular turnover of intracellular proteins. Catalyzes the removal of unsubstituted N-terminal amino acids from various peptides. The protein is Probable cytosol aminopeptidase of Bacillus cereus (strain ZK / E33L).